The following is a 432-amino-acid chain: Glutamyl-tRNA reductase (432 aa).

Residues 49–52 (TCNR), serine 107, 112–114 (ETQ), and glutamine 118 contribute to the substrate site. Cysteine 50 functions as the Nucleophile in the catalytic mechanism. 186–191 (GAGEMG) is an NADP(+) binding site.

It belongs to the glutamyl-tRNA reductase family. Homodimer.

It carries out the reaction (S)-4-amino-5-oxopentanoate + tRNA(Glu) + NADP(+) = L-glutamyl-tRNA(Glu) + NADPH + H(+). It functions in the pathway porphyrin-containing compound metabolism; protoporphyrin-IX biosynthesis; 5-aminolevulinate from L-glutamyl-tRNA(Glu): step 1/2. Its function is as follows. Catalyzes the NADPH-dependent reduction of glutamyl-tRNA(Glu) to glutamate 1-semialdehyde (GSA). The chain is Glutamyl-tRNA reductase from Campylobacter jejuni subsp. jejuni serotype O:6 (strain 81116 / NCTC 11828).